The following is a 215-amino-acid chain: Lysozyme-like protein 5 (215 aa).

The signal sequence occupies residues 1–17; it reads MKHFFITILLFCSVVSA. Positions 18–215 constitute a Ch-type lysozyme domain; the sequence is ARNGIDINSP…GVSVDMNYIP (198 aa). Residues Asp-23, Asp-113, and Glu-115 contribute to the active site.

Belongs to the glycosyl hydrolase 25 family.

Its function is as follows. Plays a role in resistance to Gram-positive bacteria S.aureus or B.thuringiensis infection. The polypeptide is Lysozyme-like protein 5 (Caenorhabditis elegans).